The sequence spans 415 residues: Histidine--tRNA ligase (415 aa).

This sequence belongs to the class-II aminoacyl-tRNA synthetase family. In terms of assembly, homodimer.

Its subcellular location is the cytoplasm. It carries out the reaction tRNA(His) + L-histidine + ATP = L-histidyl-tRNA(His) + AMP + diphosphate + H(+). This is Histidine--tRNA ligase from Rhodospirillum rubrum (strain ATCC 11170 / ATH 1.1.1 / DSM 467 / LMG 4362 / NCIMB 8255 / S1).